The sequence spans 315 residues: MMAEREEDDDTEEAWMQLRPTEPLPSQCCGSGCSPCVFDLYHRDLARWEAAQASKDRSLLRGPESQSCPSKLNPETFVAFCIIAMDRLTKDTYRVRFALPGNSQLGLRPGQHLILRGIVDDLEIQRAYTPISPANAEGYFEVLIKCYQMGLMSRYVESWRVGDTAFWRGPFGDFFYKPNQYGELLLLAAGTGLAPMVPILQSITDNENDETFVTLVGCFKTFESIYLKTFLQEQARFWNVRTFFVLSQESSSEQLPWSYQEKTHFGHLGQDLIKELVSCCRRKPFALVCGSAEFTKDIARCLLCAGLTEDSYFLF.

The region spanning 19 to 55 (RPTEPLPSQCCGSGCSPCVFDLYHRDLARWEAAQASK) is the Oxidoreductase-like domain. Residues 75–177 (ETFVAFCIIA…RGPFGDFFYK (103 aa)) enclose the FAD-binding FR-type domain. Residues 157–172 (ESWRVGDTAFWRGPFG) and 182–214 (GELLLLAAGTGLAPMVPILQSITDNENDETFVT) each bind FAD.

This sequence belongs to the flavoprotein pyridine nucleotide cytochrome reductase family. It depends on FAD as a cofactor.

It carries out the reaction 2 Fe(III)-[cytochrome b5] + NADH = 2 Fe(II)-[cytochrome b5] + NAD(+) + H(+). Functionally, NADH-cytochrome b5 reductases are involved in desaturation and elongation of fatty acids, cholesterol biosynthesis, drug metabolism, and, in erythrocyte, methemoglobin reduction. The sequence is that of NADH-cytochrome b5 reductase-like (CYB5RL) from Homo sapiens (Human).